Here is a 136-residue protein sequence, read N- to C-terminus: Small ribosomal subunit protein eS17A (136 aa).

The protein belongs to the eukaryotic ribosomal protein eS17 family. In terms of assembly, component of the small ribosomal subunit (SSU). Mature yeast ribosomes consist of a small (40S) and a large (60S) subunit. The 40S small subunit contains 1 molecule of ribosomal RNA (18S rRNA) and 33 different proteins (encoded by 57 genes). The large 60S subunit contains 3 rRNA molecules (25S, 5.8S and 5S rRNA) and 46 different proteins (encoded by 81 genes).

The protein localises to the cytoplasm. Functionally, component of the ribosome, a large ribonucleoprotein complex responsible for the synthesis of proteins in the cell. The small ribosomal subunit (SSU) binds messenger RNAs (mRNAs) and translates the encoded message by selecting cognate aminoacyl-transfer RNA (tRNA) molecules. The large subunit (LSU) contains the ribosomal catalytic site termed the peptidyl transferase center (PTC), which catalyzes the formation of peptide bonds, thereby polymerizing the amino acids delivered by tRNAs into a polypeptide chain. The nascent polypeptides leave the ribosome through a tunnel in the LSU and interact with protein factors that function in enzymatic processing, targeting, and the membrane insertion of nascent chains at the exit of the ribosomal tunnel. This is Small ribosomal subunit protein eS17A from Saccharomyces cerevisiae (strain ATCC 204508 / S288c) (Baker's yeast).